The following is a 294-amino-acid chain: Putative glucose-6-phosphate 1-epimerase (294 aa).

Substrate-binding residues include R74 and R99. The active site involves H164. D208 provides a ligand contact to substrate. E267 is a catalytic residue.

The protein belongs to the glucose-6-phosphate 1-epimerase family. Monomer in solution.

The catalysed reaction is alpha-D-glucose 6-phosphate = beta-D-glucose 6-phosphate. The polypeptide is Putative glucose-6-phosphate 1-epimerase (yeaD) (Escherichia coli (strain K12)).